A 157-amino-acid polypeptide reads, in one-letter code: Endoribonuclease YbeY (157 aa).

3 residues coordinate Zn(2+): histidine 114, histidine 118, and histidine 124.

This sequence belongs to the endoribonuclease YbeY family. Zn(2+) is required as a cofactor.

It localises to the cytoplasm. In terms of biological role, single strand-specific metallo-endoribonuclease involved in late-stage 70S ribosome quality control and in maturation of the 3' terminus of the 16S rRNA. This is Endoribonuclease YbeY from Salmonella paratyphi A (strain AKU_12601).